We begin with the raw amino-acid sequence, 190 residues long: GTP cyclohydrolase 1 (190 aa).

Cys-75, His-78, and Cys-146 together coordinate Zn(2+).

This sequence belongs to the GTP cyclohydrolase I family. In terms of assembly, toroid-shaped homodecamer, composed of two pentamers of five dimers.

It catalyses the reaction GTP + H2O = 7,8-dihydroneopterin 3'-triphosphate + formate + H(+). The protein operates within cofactor biosynthesis; 7,8-dihydroneopterin triphosphate biosynthesis; 7,8-dihydroneopterin triphosphate from GTP: step 1/1. This is GTP cyclohydrolase 1 from Campylobacter jejuni subsp. doylei (strain ATCC BAA-1458 / RM4099 / 269.97).